A 52-amino-acid polypeptide reads, in one-letter code: Large ribosomal subunit protein eL40 (52 aa).

This sequence belongs to the eukaryotic ribosomal protein eL40 family.

The chain is Large ribosomal subunit protein eL40 from Thermococcus onnurineus (strain NA1).